We begin with the raw amino-acid sequence, 370 residues long: Queuine tRNA-ribosyltransferase (370 aa).

Aspartate 92 functions as the Proton acceptor in the catalytic mechanism. Substrate contacts are provided by residues aspartate 92–phenylalanine 96, aspartate 146, glutamine 190, and glycine 217. The segment at glycine 248–asparagine 254 is RNA binding. Catalysis depends on aspartate 267, which acts as the Nucleophile. Cysteine 305, cysteine 307, cysteine 310, and histidine 336 together coordinate Zn(2+).

It belongs to the queuine tRNA-ribosyltransferase family. Homodimer. Within each dimer, one monomer is responsible for RNA recognition and catalysis, while the other monomer binds to the replacement base PreQ1. Requires Zn(2+) as cofactor.

The catalysed reaction is 7-aminomethyl-7-carbaguanine + guanosine(34) in tRNA = 7-aminomethyl-7-carbaguanosine(34) in tRNA + guanine. It participates in tRNA modification; tRNA-queuosine biosynthesis. Its function is as follows. Catalyzes the base-exchange of a guanine (G) residue with the queuine precursor 7-aminomethyl-7-deazaguanine (PreQ1) at position 34 (anticodon wobble position) in tRNAs with GU(N) anticodons (tRNA-Asp, -Asn, -His and -Tyr). Catalysis occurs through a double-displacement mechanism. The nucleophile active site attacks the C1' of nucleotide 34 to detach the guanine base from the RNA, forming a covalent enzyme-RNA intermediate. The proton acceptor active site deprotonates the incoming PreQ1, allowing a nucleophilic attack on the C1' of the ribose to form the product. After dissociation, two additional enzymatic reactions on the tRNA convert PreQ1 to queuine (Q), resulting in the hypermodified nucleoside queuosine (7-(((4,5-cis-dihydroxy-2-cyclopenten-1-yl)amino)methyl)-7-deazaguanosine). The polypeptide is Queuine tRNA-ribosyltransferase (Desulforapulum autotrophicum (strain ATCC 43914 / DSM 3382 / VKM B-1955 / HRM2) (Desulfobacterium autotrophicum)).